The primary structure comprises 479 residues: Endoglucanase 20 (479 aa).

The N-terminal stretch at methionine 1–alanine 21 is a signal peptide. The N-linked (GlcNAc...) asparagine glycan is linked to asparagine 29. Catalysis depends on aspartate 76, which acts as the Nucleophile. Histidine 398 is a catalytic residue. N-linked (GlcNAc...) asparagine glycosylation is present at asparagine 442. Catalysis depends on residues aspartate 449 and glutamate 458.

Belongs to the glycosyl hydrolase 9 (cellulase E) family.

Its subcellular location is the secreted. It carries out the reaction Endohydrolysis of (1-&gt;4)-beta-D-glucosidic linkages in cellulose, lichenin and cereal beta-D-glucans.. In Arabidopsis thaliana (Mouse-ear cress), this protein is Endoglucanase 20.